We begin with the raw amino-acid sequence, 308 residues long: Putative mitochondrial transporter UCP3 (308 aa).

Over 1–10 (MVGLQPSEVP) the chain is Mitochondrial intermembrane. Residues 11 to 32 (PTTVVKFLGAGTAACFADLLTF) traverse the membrane as a helical segment. Solcar repeat units follow at residues 11–102 (PTTV…VKQF), 111–202 (SSVA…IKEK), and 211–296 (DNFP…LKRA). The Mitochondrial matrix portion of the chain corresponds to 33-73 (PLDTAKVRLQIQGENPGVQSVQYRGVLGTILTMVRTEGPRS). Residues 74–96 (PYSGLVAGLHRQMSFASIRIGLY) form a helical membrane-spanning segment. Residues 97 to 116 (DSVKQFYTPKGTDHSSVAIR) lie on the Mitochondrial intermembrane side of the membrane. A helical transmembrane segment spans residues 117–133 (ILAGCTTGAMAVTCAQP). The Mitochondrial matrix portion of the chain corresponds to 134-179 (TDVVKVRFQAMIRLGTGGERKYRGTMDAYRTIAREEGVRGLWKGTW). Residues 180–196 (PNITRNAIVNCAEMVTY) traverse the membrane as a helical segment. Topologically, residues 197 to 213 (DIIKEKLLDSHLFTDNF) are mitochondrial intermembrane. The chain crosses the membrane as a helical span at residues 214-233 (PCHFVSAFGAGFCATVVASP). Residues 234–267 (VDVVKTRYMNAPPGRYRSPLHCMLRMVAQEGPTA) lie on the Mitochondrial matrix side of the membrane. A helical transmembrane segment spans residues 268–290 (FYKGFMPSFLRLGSWNVMMFVTY). The segment at 275–297 (SFLRLGSWNVMMFVTYEQLKRAL) is purine nucleotide binding. Residues 291 to 308 (EQLKRALMKVQVLRESPF) are Mitochondrial intermembrane-facing.

This sequence belongs to the mitochondrial carrier (TC 2.A.29) family. In terms of assembly, interacts with HAX1; the interaction is direct and calcium-dependent.

It is found in the mitochondrion inner membrane. Putative transmembrane transporter that plays a role in mitochondrial metabolism via an as yet unclear mechanism. Originally, this mitochondrial protein was thought to act as a proton transmembrane transporter from the mitochondrial intermembrane space into the matrix, causing proton leaks through the inner mitochondrial membrane, thereby uncoupling mitochondrial membrane potential generation from ATP synthesis. However, this function is controversial and uncoupling may not be the function, or at least not the main function, but rather a consequence of more conventional metabolite transporter activity. This chain is Putative mitochondrial transporter UCP3, found in Rattus norvegicus (Rat).